The following is a 957-amino-acid chain: MNNKKTVTNRKGMIPNRLNKFSIRKYSVGTASILVGTTLIFGLSGHEAKAAEHTNGELNQSKNETTAPSENKTTEKVDSRQLKDNTQTATADQPKVTMSDSATVKETSSNMQSPQNATASQSTTQTSNVTTNDKSSTTYSNETDKSNLTQAKDVSATPKTTTIKPRTLNRMAVNTVAAPQQGTNVNDKVHFSNIDIAIDKGHLNKDTGKTEFWATSSDVLKLKANYTIDDSVKEGDTFTFKYGQYFRPGSVRLPSQTQNLYNAQGNIIAKGIYDSTTNTTTYTFTNYVDQYTNVSGSFEQVAFAKRENATTDKTAYKMEVSLGNDTYSEEIIVDYGNKKAQPLISSTNYINNEDLSRNMTAYVNQPKNTYTKQTFVTNLTGYKFNPNAKNFKIYEVTDQNQFVDSFTPDTSKLKDVTNQFNITYSNDNKTATVDLMNGQTSSNKQYIIQQVAYPDNTSTDNGKIDYTLDTDKTKYSWSNSYSNVNGSSTANGDQKKYNLGDYVWEDTNKDGKQDANEKGIKGVYVILKDSNGKELDRTTTDENGKYQFTGLSNGTYSVEFSTPAGYTPTTANAGTDDAVDSDGLTTTGVIKDADNMTLDSGFYKTPKYSLGDYVWYDSNKDGKQDSTEKGIKGVKVTLQNEKGEVIGTTETDENGKYRFDNLDSGKYKVIFEKPAGLTQTGTNTTEDDKDADGGEVDVTITDHDDFTLDNGYYEEETSDSDSDSDSDSDSDSDSDSDSDSDSDSDSDSDSDSDSDSDSDSDSDSDSDSDSDSDSDSDSDSDSDSDSDSDSDSDSDSDSDSDSDSDSDSDSDSDSDSDSDSDSDSDSDSDSDSDTDSDSDSDSDSDSDSDSDSDSDSDSDSDSDSDSDSDSDSDSDSDSDSDSDSESDADSDTDSDSDAGKHTPAKPMSTVKDQHKTAKALPETGSENNNSNNGTLFGGLFAALGSLLLFGRRKKQNK.

An N-terminal signal peptide occupies residues 1-50 (MNNKKTVTNRKGMIPNRLNKFSIRKYSVGTASILVGTTLIFGLSGHEAKA). The segment at 51 to 166 (AEHTNGELNQ…TPKTTTIKPR (116 aa)) is disordered. Residues 51 to 495 (AEHTNGELNQ…GSSTANGDQK (445 aa)) form a ligand binding A region region. A compositionally biased stretch (polar residues) spans 56 to 71 (GELNQSKNETTAPSEN). The segment covering 72–83 (KTTEKVDSRQLK) has biased composition (basic and acidic residues). The segment covering 84–114 (DNTQTATADQPKVTMSDSATVKETSSNMQSP) has biased composition (polar residues). A compositionally biased stretch (low complexity) spans 115 to 132 (QNATASQSTTQTSNVTTN). Over residues 133-164 (DKSSTTYSNETDKSNLTQAKDVSATPKTTTIK) the composition is skewed to polar residues. 2 CNA-B domains span residues 496–606 (KYNL…YKTP) and 607–717 (KYSL…EEET). Residues 678–937 (TQTGTNTTED…NNSNNGTLFG (260 aa)) form a disordered region. Acidic residues-rich tracts occupy residues 685 to 695 (TEDDKDADGGE) and 712 to 896 (YYEE…DSDS). The short motif at 920–924 (LPETG) is the LPXTG sorting signal element. The segment covering 922 to 937 (ETGSENNNSNNGTLFG) has biased composition (low complexity). Threonine 923 is subject to Pentaglycyl murein peptidoglycan amidated threonine. A propeptide spans 924-957 (GSENNNSNNGTLFGGLFAALGSLLLFGRRKKQNK) (removed by sortase).

The protein belongs to the serine-aspartate repeat-containing protein (SDr) family. As to quaternary structure, homodimerizes; via N2-Domain. Interacts with host NRXN1; this interaction mediates bacterial attachment to host cells.

The protein resides in the secreted. The protein localises to the cell wall. Functionally, cell surface-associated calcium-binding protein which plays an important role in adhesion and pathogenesis. Mediates interactions with components of the extracellular matrix such as host NRXN1 to promote bacterial adhesion. This Staphylococcus aureus (strain MSSA476) protein is Serine-aspartate repeat-containing protein C (sdrC).